The chain runs to 155 residues: 6,7-dimethyl-8-ribityllumazine synthase (155 aa).

Residues Phe-24, 58–60 (AFE), and 82–84 (AII) contribute to the 5-amino-6-(D-ribitylamino)uracil site. Residue 87-88 (ST) participates in (2S)-2-hydroxy-3-oxobutyl phosphate binding. The active-site Proton donor is the His-90. Residue Phe-115 participates in 5-amino-6-(D-ribitylamino)uracil binding. Arg-129 is a binding site for (2S)-2-hydroxy-3-oxobutyl phosphate.

The protein belongs to the DMRL synthase family.

The enzyme catalyses (2S)-2-hydroxy-3-oxobutyl phosphate + 5-amino-6-(D-ribitylamino)uracil = 6,7-dimethyl-8-(1-D-ribityl)lumazine + phosphate + 2 H2O + H(+). It participates in cofactor biosynthesis; riboflavin biosynthesis; riboflavin from 2-hydroxy-3-oxobutyl phosphate and 5-amino-6-(D-ribitylamino)uracil: step 1/2. In terms of biological role, catalyzes the formation of 6,7-dimethyl-8-ribityllumazine by condensation of 5-amino-6-(D-ribitylamino)uracil with 3,4-dihydroxy-2-butanone 4-phosphate. This is the penultimate step in the biosynthesis of riboflavin. This is 6,7-dimethyl-8-ribityllumazine synthase from Chlorobium phaeovibrioides (strain DSM 265 / 1930) (Prosthecochloris vibrioformis (strain DSM 265)).